Consider the following 490-residue polypeptide: Cysteine--tRNA ligase (490 aa).

Cys-31 serves as a coordination point for Zn(2+). A 'HIGH' region motif is present at residues 33 to 43 (PTVYGDAHLGH). Zn(2+)-binding residues include Cys-226, His-251, and Glu-255. The 'KMSKS' region signature appears at 283–287 (KMGKS). Residue Lys-286 coordinates ATP.

This sequence belongs to the class-I aminoacyl-tRNA synthetase family. In terms of assembly, monomer. It depends on Zn(2+) as a cofactor.

The protein resides in the cytoplasm. It catalyses the reaction tRNA(Cys) + L-cysteine + ATP = L-cysteinyl-tRNA(Cys) + AMP + diphosphate. The chain is Cysteine--tRNA ligase from Porphyromonas gingivalis (strain ATCC BAA-308 / W83).